The sequence spans 483 residues: Glycogen synthase (483 aa).

Lysine 15 contributes to the ADP-alpha-D-glucose binding site.

Belongs to the glycosyltransferase 1 family. Bacterial/plant glycogen synthase subfamily.

The enzyme catalyses [(1-&gt;4)-alpha-D-glucosyl](n) + ADP-alpha-D-glucose = [(1-&gt;4)-alpha-D-glucosyl](n+1) + ADP + H(+). It functions in the pathway glycan biosynthesis; glycogen biosynthesis. In terms of biological role, synthesizes alpha-1,4-glucan chains using ADP-glucose. This is Glycogen synthase from Thioalkalivibrio sulfidiphilus (strain HL-EbGR7).